The chain runs to 99 residues: Nucleoid-associated protein EbfC (99 aa).

Belongs to the YbaB/EbfC family. In terms of assembly, homodimer.

Its subcellular location is the cytoplasm. The protein resides in the nucleoid. Its function is as follows. Binds to DNA and alters its conformation. May be involved in regulation of gene expression, nucleoid organization and DNA protection. This chain is Nucleoid-associated protein EbfC, found in Borreliella afzelii (strain PKo) (Borrelia afzelii).